Here is a 375-residue protein sequence, read N- to C-terminus: Succinyl-diaminopimelate desuccinylase (375 aa).

Residue His66 coordinates Zn(2+). The active site involves Asp68. Residue Asp99 coordinates Zn(2+). Glu133 (proton acceptor) is an active-site residue. Positions 134, 162, and 348 each coordinate Zn(2+).

This sequence belongs to the peptidase M20A family. DapE subfamily. In terms of assembly, homodimer. The cofactor is Zn(2+). Requires Co(2+) as cofactor.

The catalysed reaction is N-succinyl-(2S,6S)-2,6-diaminopimelate + H2O = (2S,6S)-2,6-diaminopimelate + succinate. The protein operates within amino-acid biosynthesis; L-lysine biosynthesis via DAP pathway; LL-2,6-diaminopimelate from (S)-tetrahydrodipicolinate (succinylase route): step 3/3. Its function is as follows. Catalyzes the hydrolysis of N-succinyl-L,L-diaminopimelic acid (SDAP), forming succinate and LL-2,6-diaminopimelate (DAP), an intermediate involved in the bacterial biosynthesis of lysine and meso-diaminopimelic acid, an essential component of bacterial cell walls. The chain is Succinyl-diaminopimelate desuccinylase from Escherichia coli O1:K1 / APEC.